A 111-amino-acid polypeptide reads, in one-letter code: Ig kappa chain V-III region PC 2880/PC 1229 (111 aa).

The framework-1 stretch occupies residues 1 to 23; that stretch reads DIVLTQSPASLAVSLGQRATISC. Cysteines 23 and 92 form a disulfide. The segment at 24–38 is complementarity-determining-1; that stretch reads RASESVDNYGISFMN. The interval 39-53 is framework-2; that stretch reads WFQQKPGQPPKLLIY. The segment at 54–60 is complementarity-determining-2; it reads AASNQGS. Residues 61–92 are framework-3; the sequence is GVPARFSGSGSGTDFSLNIHPMEEDDTAMYFC. The tract at residues 93-101 is complementarity-determining-3; it reads QQSKEVPWT. Positions 102–111 are framework-4; the sequence is FGGGTKLEIK.

This chain is Ig kappa chain V-III region PC 2880/PC 1229, found in Mus musculus (Mouse).